The chain runs to 726 residues: Bromodomain-containing protein 3 (726 aa).

The tract at residues 1–35 (MSTATTVAPAGIPATPGPVNPPPPEVSNPSKPGRK) is disordered. Position 2 is an N-acetylserine (Ser-2). Positions 15–26 (TPGPVNPPPPEV) are enriched in pro residues. Residues 34-140 (RKTNQLQYMQ…KIFLQKVAQM (107 aa)) form the Bromo 1 domain. Residues 78–80 (KNP) are acetylated histone H3 binding. Disordered regions lie at residues 149 to 169 (PPAPKGKGRKPAAGAQSAGTQ) and 237 to 305 (VKKK…AGKK). Positions 248 to 261 (TTTPTTSAITASRS) are enriched in low complexity. Phosphoserine occurs at positions 263 and 281. One can recognise a Bromo 2 domain in the interval 306 to 415 (GKLSEHLRYC…DVFEMRFAKM (110 aa)). Lys-414 is covalently cross-linked (Glycyl lysine isopeptide (Lys-Gly) (interchain with G-Cter in SUMO2)). Disordered stretches follow at residues 421–462 (EAPA…RATR), 477–575 (LAAL…MSYD), and 637–726 (LQKK…SDSE). Positions 453–524 (SDSEEERATR…AEEEKKAKVA (72 aa)) form a coiled coil. The segment covering 487 to 503 (KPKKKKEKKEKEKKKKD) has biased composition (basic residues). Positions 504–521 (KEKEKEKHKVKAEEEKKA) are enriched in basic and acidic residues. Residues 523 to 540 (VAPPAKQAQQKKAPAKKA) are compositionally biased toward low complexity. In terms of domain architecture, NET spans 562–644 (DSEEEEEGLP…SCLQKKQRKP (83 aa)). Phosphoserine is present on Ser-563. The stretch at 645-684 (FSASGKKQAAKSKEELAQEKKKELEKRLQDVSGQLSSSKK) forms a coiled coil. The span at 655-673 (KSKEELAQEKKKELEKRLQ) shows a compositional bias: basic and acidic residues. Residues 692–726 (GSAPSGGPSRLSSSSSSESGSSSSSGSSSDSSDSE) show a composition bias toward low complexity.

It belongs to the BET family. As to quaternary structure, interacts (via bromo domain 1) with GATA1 acetylated at 'Lys-312' and 'Lys-315'. Interacts (via bromo domain 1) with GATA2 acetylated on lysine residues. Interacts (via NET domain) with CHD4 (via KIKL motif). Interacts (via NET domain) with SMARCA4 (via KIKL motif). Interacts (via NET domain) with NSD3 (via KIKL motif). (Microbial infection) Interacts with the Integrase protein of Moloney murine leukemia virus (MLV). Ubiquitous.

The protein resides in the nucleus. Its subcellular location is the chromosome. Its activity is regulated as follows. Inhibited by JQ1, a thieno-triazolo-1,4-diazepine derivative, which specifically inhibits members of the BET family (BRD2, BRD3 and BRD4). The first bromo domain is inhibited by GSK778 (iBET-BD1), which specifically inhibits the first bromo domain of members of the BET family (BRD2, BRD3 and BRD4). The second bromo domain is inhibited by ABBV-744, which specifically inhibits the second bromo domain of members of the BET family (BRD2, BRD3 and BRD4). The second bromo domain is inhibited by GSK046 (iBET-BD2), which specifically inhibits the second bromo domain of members of the BET family (BRD2, BRD3 and BRD4). In terms of biological role, chromatin reader that recognizes and binds acetylated histones, thereby controlling gene expression and remodeling chromatin structures. Recruits transcription factors and coactivators to target gene sites, and activates RNA polymerase II machinery for transcriptional elongation. In vitro, binds acetylated lysine residues on the N-terminus of histone H2A, H2B, H3 and H4. Involved in endoderm differentiation via its association with long non-coding RNA (lncRNA) DIGIT: BRD3 undergoes liquid-liquid phase separation upon binding to lncRNA DIGIT, promoting binding to histone H3 acetylated at 'Lys-18' (H3K18ac) to induce endoderm gene expression. Also binds non-histones acetylated proteins, such as GATA1 and GATA2: regulates transcription by promoting the binding of the transcription factor GATA1 to its targets. This Homo sapiens (Human) protein is Bromodomain-containing protein 3.